A 196-amino-acid polypeptide reads, in one-letter code: dTTP/UTP pyrophosphatase (196 aa).

The active-site Proton acceptor is the Asp-78.

This sequence belongs to the Maf family. YhdE subfamily. It depends on a divalent metal cation as a cofactor.

It is found in the cytoplasm. The enzyme catalyses dTTP + H2O = dTMP + diphosphate + H(+). It carries out the reaction UTP + H2O = UMP + diphosphate + H(+). Functionally, nucleoside triphosphate pyrophosphatase that hydrolyzes dTTP and UTP. May have a dual role in cell division arrest and in preventing the incorporation of modified nucleotides into cellular nucleic acids. The sequence is that of dTTP/UTP pyrophosphatase from Photobacterium profundum (strain SS9).